The following is a 363-amino-acid chain: Ly6/PLAUR domain-containing protein 3 (363 aa).

The first 32 residues, 1–32 (MDAARRGDTQPVMWTTGWLLLLPLLLCEGAQA), serve as a signal peptide directing secretion. Residues 35–128 (CYSCVQKADD…LNLTLRGLNP (94 aa)) form the UPAR/Ly6 1 domain. N-linked (GlcNAc...) asparagine glycans are attached at residues N120, N131, N178, and N185. The UPAR/Ly6 2 domain occupies 142-224 (CYSCVGLSRE…GSCCQGPRCN (83 aa)). Pro residues predominate over residues 238–248 (PPLVLLPPPTT). Disordered regions lie at residues 238 to 287 (PPLV…TSPH) and 301 to 336 (LSGG…GGAQ). Over residues 249–278 (AAPSTRAQNSSSTTSTAAPTTTTSIIKPTT) the composition is skewed to low complexity. Gly residues predominate over residues 304-318 (GAAGHGGTAGHGGAA). Over residues 320-330 (HQDRSNMEKYP) the composition is skewed to basic and acidic residues. S343 is lipidated: GPI-anchor amidated serine. Residues 344 to 363 (GTLGSWLSAVLLTVVAGAML) constitute a propeptide, removed in mature form.

Binds laminin-1 and laminin-5. Interacts with LGALS3. Interacts with AGR2 and AGR3.

The protein resides in the cell membrane. Supports cell migration. May be involved in tumor progression. This chain is Ly6/PLAUR domain-containing protein 3 (Lypd3), found in Mus musculus (Mouse).